Reading from the N-terminus, the 620-residue chain is Probable potassium transport system protein Kup 1 (620 aa).

12 helical membrane passes run 7 to 27 (GIGL…TSPL), 50 to 70 (VLSL…VIVI), 102 to 122 (MMLG…TPAI), 136 to 156 (PDLK…LFAI), 168 to 188 (FGPV…ANIV), 211 to 231 (LMSF…EALY), 246 to 266 (WFGL…ALLI), 284 to 304 (MVVP…QAVI), 336 to 356 (IYVP…VVGF), 368 to 388 (IAVT…AALL), 393 to 413 (PVVV…FFAA), and 415 to 435 (IIKV…SFTV).

This sequence belongs to the HAK/KUP transporter (TC 2.A.72) family.

The protein resides in the cell inner membrane. The enzyme catalyses K(+)(in) + H(+)(in) = K(+)(out) + H(+)(out). Functionally, transport of potassium into the cell. Likely operates as a K(+):H(+) symporter. In Rhodopseudomonas palustris (strain ATCC BAA-98 / CGA009), this protein is Probable potassium transport system protein Kup 1.